Reading from the N-terminus, the 333-residue chain is MSNHTQPKIAIIGYGSQGRAHALNLRDSGFDVTVGLRPGGPTEAKAQADGFTVVAPSEAVKSADLVAILTPDMVQKKLYEEVIAPNMKQGACLLFAHGLNVHFDMITPRADLDVVLVAPKGPGALVRREYEIGRGVPCIYAVYQDTSGKAEQFALTYAGGLGGARANIIKTTFKEETETDLFGEQAVLCGGASSLVQAGFEVLVEAGYQPEIAYYEVLHELKLIVDLFYEGGITRMLEFVSETAQYGDYVSGPRVIDAGTKARMKDVLTDIQNGTFTKNWVAEYDAGLPNYNKFKQADLEHPIEEVGKKLRAKMVWLNGQQQAAAAPANQQAA.

Residues 1–171 (MSNHTQPKIA…GGARANIIKT (171 aa)) enclose the KARI N-terminal Rossmann domain. NADP(+)-binding positions include 14-17 (YGSQ), Arg37, Thr42, and 72-75 (DMVQ). The active site involves His97. Gly123 contacts NADP(+). Residues 172 to 317 (TFKEETETDL…KKLRAKMVWL (146 aa)) enclose the KARI C-terminal knotted domain. Positions 180, 184, 216, and 220 each coordinate Mg(2+). A substrate-binding site is contributed by Ser241.

The protein belongs to the ketol-acid reductoisomerase family. The cofactor is Mg(2+).

The enzyme catalyses (2R)-2,3-dihydroxy-3-methylbutanoate + NADP(+) = (2S)-2-acetolactate + NADPH + H(+). It carries out the reaction (2R,3R)-2,3-dihydroxy-3-methylpentanoate + NADP(+) = (S)-2-ethyl-2-hydroxy-3-oxobutanoate + NADPH + H(+). It participates in amino-acid biosynthesis; L-isoleucine biosynthesis; L-isoleucine from 2-oxobutanoate: step 2/4. Its pathway is amino-acid biosynthesis; L-valine biosynthesis; L-valine from pyruvate: step 2/4. Involved in the biosynthesis of branched-chain amino acids (BCAA). Catalyzes an alkyl-migration followed by a ketol-acid reduction of (S)-2-acetolactate (S2AL) to yield (R)-2,3-dihydroxy-isovalerate. In the isomerase reaction, S2AL is rearranged via a Mg-dependent methyl migration to produce 3-hydroxy-3-methyl-2-ketobutyrate (HMKB). In the reductase reaction, this 2-ketoacid undergoes a metal-dependent reduction by NADPH to yield (R)-2,3-dihydroxy-isovalerate. This chain is Ketol-acid reductoisomerase (NADP(+)), found in Xanthomonas axonopodis pv. citri (strain 306).